The chain runs to 1009 residues: Glutamate receptor ionotropic, delta-1 (1009 aa).

The first 20 residues, methionine 1 to alanine 20, serve as a signal peptide directing secretion. Positions aspartate 21 to glycine 436 are interaction with CBLN1. The Extracellular segment spans residues aspartate 21 to aspartate 562. Intrachain disulfides connect cysteine 80-cysteine 351, cysteine 96-cysteine 128, and cysteine 294-cysteine 306. N-linked (GlcNAc...) asparagine glycans are attached at residues asparagine 131 and asparagine 200. N-linked (GlcNAc...) asparagine glycosylation is found at asparagine 422 and asparagine 498. Residues glutamate 527, valine 530, and aspartate 531 each coordinate Ca(2+). Residues phenylalanine 563–leucine 583 form a helical membrane-spanning segment. At asparagine 584–tryptophan 637 the chain is on the cytoplasmic side. The chain crosses the membrane as a helical span at residues tryptophan 638 to valine 658. Residues serine 659–serine 830 lie on the Extracellular side of the membrane. Ca(2+) is bound by residues aspartate 753, aspartate 755, and serine 757. A helical membrane pass occupies residues phenylalanine 831–leucine 851. The Cytoplasmic segment spans residues glutamate 852–isoleucine 1009. Positions phenylalanine 930 to threonine 942 are enriched in polar residues. The interval phenylalanine 930–proline 954 is disordered. Residues leucine 943–proline 954 are compositionally biased toward low complexity.

This sequence belongs to the glutamate-gated ion channel (TC 1.A.10.1) family. GRID1 subfamily. In terms of assembly, homodimer. Interacts (via extracellular N-terminal domain) with CBLN1 (via C1q domain), and more weakly with CBLN2; the interactions mediate the trans-synaptic adhesion complexes also with neurexins and are required for ligand-gated cation channel activity.

It localises to the postsynaptic cell membrane. The enzyme catalyses Ca(2+)(in) = Ca(2+)(out). It carries out the reaction Na(+)(in) = Na(+)(out). In terms of biological role, member of the ionotropic glutamate receptor family, which plays a crucial role in synaptic organization and signal transduction in the central nervous system. Although it shares structural features with ionotropic glutamate receptors, does not bind glutamate as a primary ligand. Instead, forms trans-synaptic adhesion complexes with presynaptic neurexins and cerebellins, regulating NMDA and AMPA receptor activity and influencing synaptic plasticity through signal transduction. In the presence of neurexins and cerebellins, forms cation-selective channels that are proposed to be gated by glycine and D-serine. However, recent research disputes this ligand-gated cation channel activity. Cation-selective ion channel can be triggered by GRM1 in dopaminergic neurons. Also acts as a receptor for GABA, modulating inhibitory synaptic plasticity through non-ionotropic mechanisms. In Homo sapiens (Human), this protein is Glutamate receptor ionotropic, delta-1.